Reading from the N-terminus, the 336-residue chain is MATIKDVAKMAGVSTTTVSHVINKTRFVAKDTEEAVLSAIKQLNYSPSAVARSLKVNTTKSIGMIVTTSEAPYFAEIIHSVEEHCYRQGYSLFCVTHKMDPEKVKNHLEMLAKKRVDGLLVMCSEYTQDSLDLLSSFSTIPMVVMDWGPNANTDVIDDHSFDGGYLATKHLIECGHKKIGIICGELNKTTARTRYEGFEKAMEEAKLTINPSWVLEGAFEPEDGYECMNRLLTQEKLPTALFCCNDVMALGAISALTEKGLRVPEDMSIIGYDDIHASRFYAPPLTTIHQSKLRLGRQAINILLERITHKDEGVQQYSRIDITPELIIRKSVKSIL.

The HTH lacI-type domain maps to 2 to 56 (ATIKDVAKMAGVSTTTVSHVINKTRFVAKDTEEAVLSAIKQLNYSPSAVARSLKV). Positions 4–23 (IKDVAKMAGVSTTTVSHVIN) form a DNA-binding region, H-T-H motif. The DNA-binding element occupies 48-56 (SAVARSLKV). Tyrosine 73, lysine 188, threonine 190, phenylalanine 219, and aspartate 273 together coordinate hypoxanthine.

As to quaternary structure, homodimer.

The protein operates within purine metabolism; purine nucleotide biosynthesis [regulation]. Its function is as follows. Is the main repressor of the genes involved in the de novo synthesis of purine nucleotides, regulating purB, purC, purEK, purF, purHD, purL, purMN and guaBA expression. PurR is allosterically activated to bind its cognate DNA by binding the purine corepressors, hypoxanthine or guanine, thereby effecting transcription repression. The sequence is that of HTH-type transcriptional repressor PurR from Haemophilus influenzae (strain ATCC 51907 / DSM 11121 / KW20 / Rd).